The chain runs to 890 residues: DNA mismatch repair protein MutS (890 aa).

Over residues 1–13 the composition is skewed to basic and acidic residues; it reads MDKGINLQNDKEP. A disordered region spans residues 1–23; the sequence is MDKGINLQNDKEPSPMAEGNPAD. Position 649–656 (649–656) interacts with ATP; it reads GPNMGGKS.

The protein belongs to the DNA mismatch repair MutS family.

This protein is involved in the repair of mismatches in DNA. It is possible that it carries out the mismatch recognition step. This protein has a weak ATPase activity. This Paracidovorax citrulli (strain AAC00-1) (Acidovorax citrulli) protein is DNA mismatch repair protein MutS.